The following is a 152-amino-acid chain: Nucleoside diphosphate kinase B (152 aa).

The tract at residues 1 to 66 is interaction with AKAP13; that stretch reads MAHQERTFIA…DRPFYPGLVK (66 aa). Lys-12, Phe-60, Arg-88, Thr-94, Arg-105, and Asn-115 together coordinate ATP. His-118 serves as the catalytic Pros-phosphohistidine intermediate.

The protein belongs to the NDK family. As to quaternary structure, hexamer of two different chains: An and B (A6, A5B, A4B2, A3B3, A2B4, AB5, B6). Interacts with CAPN8. Interacts with AKAP13. Interacts with ITGB1BP1 (via C-terminal domain region). Interacts with BCL2L10. The cofactor is Mg(2+). In terms of tissue distribution, ubiquitous.

The protein resides in the cytoplasm. It localises to the cell projection. It is found in the lamellipodium. The protein localises to the ruffle. Its subcellular location is the nucleus. The enzyme catalyses a 2'-deoxyribonucleoside 5'-diphosphate + ATP = a 2'-deoxyribonucleoside 5'-triphosphate + ADP. The catalysed reaction is a ribonucleoside 5'-diphosphate + ATP = a ribonucleoside 5'-triphosphate + ADP. It carries out the reaction ATP + protein L-histidine = ADP + protein N-phospho-L-histidine.. Its function is as follows. Major role in the synthesis of nucleoside triphosphates other than ATP. The ATP gamma phosphate is transferred to the NDP beta phosphate via a ping-pong mechanism, using a phosphorylated active-site intermediate. Negatively regulates Rho activity by interacting with AKAP13/LBC. Acts as a transcriptional activator of the MYC gene; binds DNA non-specifically. Binds to both single-stranded guanine- and cytosine-rich strands within the nuclease hypersensitive element (NHE) III(1) region of the MYC gene promoter. Does not bind to duplex NHE III(1). Has G-quadruplex (G4) DNA-binding activity, which is independent of its nucleotide-binding and kinase activity. Binds both folded and unfolded G4 with similar low nanomolar affinities. Stabilizes folded G4s regardless of whether they are prefolded or not. Exhibits histidine protein kinase activity. This Canis lupus familiaris (Dog) protein is Nucleoside diphosphate kinase B (NME2).